Reading from the N-terminus, the 2446-residue chain is Transcription factor HIVEP2 (2446 aa).

Positions 1-93 (MDTGDTALGQ…YPPHRPSPYS (93 aa)) are disordered. Positions 17-28 (GETDKASGRWRQ) are enriched in basic and acidic residues. 2 consecutive C2H2-type zinc fingers follow at residues 189–211 (YICPYCSRACAKPSVLKKHIRSH) and 217–239 (YPCIPCGFSFKTKSNLYKHRKSH). 4 disordered regions span residues 272 to 303 (HSDGEQSTDTDEESSLFAEASDKMSPGPPIPL), 340 to 416 (ESSQ…PPNT), 543 to 563 (SNSVPTSSATNLTIPPSLRGS), and 751 to 985 (SHGH…SFER). 2 stretches are compositionally biased toward polar residues: residues 381–416 (SEPSLNLLSPHSKGSTDSGYFSRSESAEQQISPPNT) and 543–556 (SNSVPTSSATNLTI). Positions 751-760 (SHGHTERFDP) are enriched in basic and acidic residues. A compositionally biased stretch (polar residues) spans 766-777 (QPGSPSLVSEES). The span at 782 to 791 (DSDKMSDLGG) shows a compositional bias: basic and acidic residues. Residues 800 to 812 (SVIQHTNSLSRPN) are compositionally biased toward polar residues. A Phosphoserine modification is found at serine 819. Over residues 863-878 (PSPSQQVQQQSYHTQP) the composition is skewed to low complexity. Residues 892-916 (RVTEEPDKPEKEKEAQSKEPEKPVE) are compositionally biased toward basic and acidic residues. A Nuclear localization signal motif is present at residues 937–943 (PKKKRLR). 5 positions are modified to phosphoserine: serine 950, serine 955, serine 1048, serine 1443, and serine 1447. Low complexity predominate over residues 952–982 (GESSFESTGTGLSRSPSQESNLSHSSSFSMS). The interval 1485 to 1603 (KDLSRPQKPQ…LEEEGKGHKR (119 aa)) is disordered. Low complexity-rich tracts occupy residues 1510–1533 (SGSSSFSSLSPSSSQDYPSVSPSS) and 1576–1586 (SDMSMSPQSSS). 2 consecutive C2H2-type zinc fingers follow at residues 1799–1821 (YICEECGIRCKKPSMLKKHIRTH) and 1827–1851 (YVCKLCNFAFKTKGNLTKHMKSKAH). Disordered stretches follow at residues 1882-1951 (AAEK…VNVG) and 2024-2129 (EECM…RRDL). The segment covering 1899-1925 (DAEESDGEDGDDNDDDDEDEDDFDDQG) has biased composition (acidic residues). Over residues 2029–2053 (PSEPSSSPRDFSPSSHHSSPGYDSS) the composition is skewed to low complexity. 10 repeat units span residues 2053 to 2056 (SPCR), 2059 to 2062 (SPKR), 2071 to 2074 (SPRR), 2083 to 2086 (SPMR), 2089 to 2092 (SPRK), 2106 to 2109 (SPRR), 2112 to 2115 (SPRR), 2118 to 2121 (SPGK), 2130 to 2133 (SPRR), and 2145 to 2148 (SPRR). A 10 X 4 AA tandem repeats of S-P-[RGMKC]-[RK] region spans residues 2053–2148 (SPCRDNSPKR…TTIRAPSPRR (96 aa)). The span at 2078 to 2107 (PRRDLSPMRHLSPRKEAALRREMSQRDVSP) shows a compositional bias: basic and acidic residues. Serine 2118 carries the phosphoserine modification. Disordered regions lie at residues 2242-2325 (PALS…QEEN), 2371-2403 (HFSRPEPGQPCTSATHPDLHDGEKDNFGTSQTP), and 2423-2446 (HSSKELSSSTEESKDPSSEKSQLH). Serine 2297 and serine 2301 each carry phosphoserine. Residues 2307–2317 (KQSTSEDSLNA) are compositionally biased toward polar residues. Over residues 2387–2396 (PDLHDGEKDN) the composition is skewed to basic and acidic residues. 2 positions are modified to phosphoserine: serine 2429 and serine 2431. Residues 2433-2446 (EESKDPSSEKSQLH) show a composition bias toward basic and acidic residues.

Interacts with TCF4. As to expression, expressed in brain and skeletal muscle.

The protein localises to the nucleus. This protein specifically binds to the DNA sequence 5'-GGGACTTTCC-3' which is found in the enhancer elements of numerous viral promoters such as those of SV40, CMV, or HIV1. In addition, related sequences are found in the enhancer elements of a number of cellular promoters, including those of the class I MHC, interleukin-2 receptor, somatostatin receptor II, and interferon-beta genes. It may act in T-cell activation. The polypeptide is Transcription factor HIVEP2 (HIVEP2) (Homo sapiens (Human)).